The chain runs to 514 residues: Exoglucanase 1 (514 aa).

Residues 1-17 (MYQKLALISAFLATARA) form the signal peptide. A catalytic region spans residues 18–453 (QSACTLQAET…GSTGNSSGGN (436 aa)). Intrachain disulfides connect Cys-21/Cys-89, Cys-36/Cys-42, Cys-67/Cys-88, Cys-78/Cys-84, Cys-155/Cys-414, Cys-189/Cys-227, Cys-193/Cys-226, Cys-247/Cys-273, Cys-255/Cys-260, and Cys-278/Cys-348. N-linked (GlcNAc...) asparagine glycosylation is found at Asn-62 and Asn-81. The active-site Nucleophile is Glu-229. Glu-234 acts as the Proton donor in catalysis. Asn-287 carries N-linked (GlcNAc...) asparagine glycosylation. 2 disordered regions span residues 401–427 (NETS…LESN) and 444–481 (GSTG…PTQT). The segment at 454–478 (PPGGNPPGTTTTRRPATSTGSSPGP) is linker. Residues 460 to 479 (PGTTTTRRPATSTGSSPGPT) show a composition bias toward low complexity. The 37-residue stretch at 478–514 (PTQTHYGQCGGIGYSGPTVCASGSTCQVLNPYYSQCL) folds into the CBM1 domain. 2 cysteine pairs are disulfide-bonded: Cys-486-Cys-503 and Cys-497-Cys-513.

Belongs to the glycosyl hydrolase 7 (cellulase C) family.

It catalyses the reaction Hydrolysis of (1-&gt;4)-beta-D-glucosidic linkages in cellulose and cellotetraose, releasing cellobiose from the non-reducing ends of the chains.. Functionally, the biological conversion of cellulose to glucose generally requires three types of hydrolytic enzymes: (1) Endoglucanases which cut internal beta-1,4-glucosidic bonds; (2) Exocellobiohydrolases that cut the disaccharide cellobiose from the non-reducing end of the cellulose polymer chain; (3) Beta-1,4-glucosidases which hydrolyze the cellobiose and other short cello-oligosaccharides to glucose. The sequence is that of Exoglucanase 1 (cbh1) from Hypocrea rufa (Trichoderma viride).